The sequence spans 2365 residues: Voltage-dependent T-type calcium channel subunit alpha-1H (2365 aa).

Residues 1–63 (MTEGTLAADE…PGTECGADLG (63 aa)) form a disordered region. Topologically, residues 1–100 (MTEGTLAADE…SWCLRLVSRR (100 aa)) are cytoplasmic. The segment covering 16–36 (GASPSAPAAPVRASPASPGVP) has biased composition (low complexity). An I repeat occupies 87–422 (TRPRSWCLRL…LCLVVIATQF (336 aa)). A helical membrane pass occupies residues 101–119 (WFEHISMLVIMLNCVTLGM). Residues 120–141 (FRPCEDVECRSERCSILEAFDD) are Extracellular-facing. Residue Asp-140 coordinates Zn(2+). The helical transmembrane segment at 142 to 160 (FIFAFFAVEMVIKMVALGL) threads the bilayer. The Cytoplasmic segment spans residues 161 to 169 (FGQKCYLGD). A helical transmembrane segment spans residues 170–184 (TWNRLDFFIVMAGMM). Topologically, residues 185 to 193 (EYSLDGHNV) are extracellular. Residues Asp-189 and His-191 each contribute to the Zn(2+) site. Residue Asn-192 is glycosylated (N-linked (GlcNAc...) asparagine). The chain crosses the membrane as a helical span at residues 194–212 (SLSAIRTVRVLRPLRAINR). The Cytoplasmic segment spans residues 213–232 (VPSMRILVTLLLDTLPMLGN). The chain crosses the membrane as a helical span at residues 233–253 (VLLLCFFVFFIFGIVGVQLWA). Topologically, residues 254 to 394 (GLLRNRCFLD…YYVMDAHSFY (141 aa)) are extracellular. Residue Asn-271 is glycosylated (N-linked (GlcNAc...) asparagine). A helical membrane pass occupies residues 395–419 (NFIYFILLIIVGSFFMINLCLVVIA). Residues 420-790 (TQFSETKQRE…SKLRRIVDSK (371 aa)) lie on the Cytoplasmic side of the membrane. Disordered stretches follow at residues 490–573 (VDPS…SESV), 618–656 (PSGA…SPSP), and 737–761 (GDCR…RWRP). A compositionally biased stretch (basic residues) spans 500-532 (GPRRRPRRAGRRTASVHHLVYHHHHHHHHHYHF). Pro residues predominate over residues 557–566 (PPSPPSPGHG). Over residues 621 to 631 (AVNSKGSTSSR) the composition is skewed to polar residues. The stretch at 776–1015 (WASFSSKLRR…LLVAILVEGF (240 aa)) is one II repeat. A helical transmembrane segment spans residues 791-811 (YFNRGIMAAILVNTLSMGVEY). Residues 812-824 (HEQPDELTNALEI) lie on the Extracellular side of the membrane. Residues 825-846 (SNIVFTSMFALEMLLKLLACGP) traverse the membrane as a helical segment. The Cytoplasmic segment spans residues 847-852 (LGYIRN). Residues 853 to 871 (PYNIFDGIVVIISVWEIVG) form a helical membrane-spanning segment. Over 872–879 (QADGGLSV) the chain is Extracellular. A helical transmembrane segment spans residues 880–903 (LRTFRLLRVLKLVRFLPALRRQLV). Over 904–914 (VLMRTMDNVAT) the chain is Cytoplasmic. Residues 915–935 (FCMLLMLFIFIFSILGMHLFG) form a helical membrane-spanning segment. Residues 936–987 (CKFSLKTDSGDTVPDRKNFDSLLWAIVTVFQILTQEDWNVVLYNGMASTSSW) are Extracellular-facing. The helical transmembrane segment at 988–1012 (AALYFVALMTFGNYVLFNLLVAILV) threads the bilayer. Over 1013–1301 (EGFQAEGDAT…NRLRVSCQKV (289 aa)) the chain is Cytoplasmic. The interval 1059 to 1215 (PNGHLEGRGS…HRSTMDLCPP (157 aa)) is disordered. Over residues 1130-1147 (GPNSAGSSRRSSWNSLGR) the composition is skewed to low complexity. Residues 1199 to 1209 (RRAESLGHRST) are compositionally biased toward basic and acidic residues. The III repeat unit spans residues 1292 to 1569 (NRLRVSCQKV…MFVGVVVENF (278 aa)). The helical transmembrane segment at 1302 to 1324 (IAHKMFDHVVLVFIFLNCITIAL) threads the bilayer. Topologically, residues 1325–1342 (ERPDIDPGSTERAFLSVS) are extracellular. Residues 1343-1363 (NYIFTAIFVVEMMVKVVALGL) traverse the membrane as a helical segment. Residues 1364-1373 (LWGEHAYLQS) are Cytoplasmic-facing. A helical membrane pass occupies residues 1374–1393 (SWNVLDGLLVLVSLVDIIVA). At 1394-1407 (VASAGGAKILGVLR) the chain is on the extracellular side. A helical transmembrane segment spans residues 1408–1429 (VLRLLRTLRPLRVISRAPGLKL). The Cytoplasmic segment spans residues 1430-1439 (VVETLISSLR). The helical transmembrane segment at 1440 to 1463 (PIGNIVLICCAFFIIFGILGVQLF) threads the bilayer. Residues 1464 to 1540 (KGKFYYCEGT…DQQPVQNHNP (77 aa)) lie on the Extracellular side of the membrane. The N-linked (GlcNAc...) asparagine glycan is linked to Asn-1477. A helical transmembrane segment spans residues 1541–1566 (WMLLYFISFLLIVSFFVLNMFVGVVV). Residues 1567–1627 (ENFHKCRQHQ…RRSIHSLCTS (61 aa)) are Cytoplasmic-facing. The stretch at 1613–1874 (DYSHTRRSIH…VVVAVLMKHL (262 aa)) is one IV repeat. A helical transmembrane segment spans residues 1628 to 1648 (HYLDLFITFIICLNVITMSME). The Extracellular segment spans residues 1649–1662 (HYNQPKSLDEALKY). A helical transmembrane segment spans residues 1663 to 1684 (CNYVFTIVFVFEAALKLVAFGF). Residues 1685-1691 (RRFFKDR) lie on the Cytoplasmic side of the membrane. The chain crosses the membrane as a helical span at residues 1692–1710 (WNQLDLAIVLLSIMGIALE). The Extracellular portion of the chain corresponds to 1711 to 1724 (EIEMNAALPINPTI). Residues 1725 to 1748 (IRIMRVLRIARVLKLLKMATGMRA) traverse the membrane as a helical segment. Over 1749–1762 (LLDTVVQALPQVGN) the chain is Cytoplasmic. A helical membrane pass occupies residues 1763–1783 (LGLLFMLLFFIYAALGVELFG). At 1784 to 1846 (RLECSEDNPC…KHCLSYLPAL (63 aa)) the chain is on the extracellular side. A helical transmembrane segment spans residues 1847-1874 (SPVYFVTFVLVAQFVLVNVVVAVLMKHL). Residues 1875-2365 (EESNKEARED…APDDSGDEPV (491 aa)) lie on the Cytoplasmic side of the membrane. 2 stretches are compositionally biased toward polar residues: residues 1897-1916 (QGST…TEPD) and 1967-1983 (VTSA…SFQV). Disordered stretches follow at residues 1897-1920 (QGST…TPNL), 1967-1999 (VTSA…PLCA), 2053-2264 (APLG…GERW), and 2321-2365 (ELSM…DEPV). Residues 2092 to 2102 (DDAEAADPADE) show a composition bias toward acidic residues. Basic and acidic residues predominate over residues 2172–2187 (GDGHLESGEVRARASE).

It belongs to the calcium channel alpha-1 subunit (TC 1.A.1.11) family. CACNA1H subfamily. In terms of assembly, interacts (via N-terminal cytoplasmic domain) with STAC. Post-translationally, in response to raising of intracellular calcium, the T-type channels are activated by CaM-kinase II. As to expression, is highly expressed in lumbosacral and thoracolumbar dorsal root ganglion neurons.

Its subcellular location is the cell membrane. It carries out the reaction Ca(2+)(in) = Ca(2+)(out). Voltage-sensitive calcium channel that gives rise to T-type calcium currents. T-type calcium channels belong to the 'low-voltage activated (LVA)' group. A particularity of this type of channel is an opening at quite negative potentials, and a voltage-dependent inactivation. T-type channels serve pacemaking functions in both central neurons and cardiac nodal cells and support calcium signaling in secretory cells and vascular smooth muscle. They may also be involved in the modulation of firing patterns of neurons. In the adrenal zona glomerulosa, participates in the signaling pathway leading to aldosterone production in response to either AGT/angiotensin II, or hyperkalemia. This is Voltage-dependent T-type calcium channel subunit alpha-1H (Cacna1h) from Mus musculus (Mouse).